Here is a 127-residue protein sequence, read N- to C-terminus: Large ribosomal subunit protein bL12 (127 aa).

It belongs to the bacterial ribosomal protein bL12 family. Homodimer. Part of the ribosomal stalk of the 50S ribosomal subunit. Forms a multimeric L10(L12)X complex, where L10 forms an elongated spine to which 2 to 4 L12 dimers bind in a sequential fashion. Binds GTP-bound translation factors.

Its function is as follows. Forms part of the ribosomal stalk which helps the ribosome interact with GTP-bound translation factors. Is thus essential for accurate translation. This is Large ribosomal subunit protein bL12 from Symbiobacterium thermophilum (strain DSM 24528 / JCM 14929 / IAM 14863 / T).